A 514-amino-acid polypeptide reads, in one-letter code: Maturase K (514 aa).

This sequence belongs to the intron maturase 2 family. MatK subfamily.

The protein localises to the plastid. It is found in the chloroplast. Functionally, usually encoded in the trnK tRNA gene intron. Probably assists in splicing its own and other chloroplast group II introns. This chain is Maturase K, found in Erythronium grandiflorum (Yellow avalanche-lily).